Here is a 240-residue protein sequence, read N- to C-terminus: Endonuclease V (240 aa).

2 residues coordinate Mg(2+): D46 and D116.

It belongs to the endonuclease V family. Mg(2+) is required as a cofactor.

It localises to the cytoplasm. It catalyses the reaction Endonucleolytic cleavage at apurinic or apyrimidinic sites to products with a 5'-phosphate.. Functionally, DNA repair enzyme involved in the repair of deaminated bases. Selectively cleaves double-stranded DNA at the second phosphodiester bond 3' to a deoxyinosine leaving behind the intact lesion on the nicked DNA. This Rhodospirillum centenum (strain ATCC 51521 / SW) protein is Endonuclease V.